The following is a 501-amino-acid chain: 2-phosphoxylose phosphatase 1 (501 aa).

Residues 1–6 are Cytoplasmic-facing; sequence MLLRNR. Residues 7–27 traverse the membrane as a helical; Signal-anchor for type II membrane protein segment; sequence FLLLLALAGLLAFLSLSLQFF. At 28–501 the chain is on the lumenal side; it reads SRWLPVSLQL…YYDACHQRLF (474 aa). Catalysis depends on H120, which acts as the Nucleophile. Residues N328 and N377 are each glycosylated (N-linked (GlcNAc...) asparagine). D402 serves as the catalytic Proton donor. N488 carries N-linked (GlcNAc...) asparagine glycosylation.

Belongs to the histidine acid phosphatase family.

The protein localises to the golgi apparatus membrane. It carries out the reaction 3-O-[beta-D-GlcA-(1-&gt;3)-beta-D-Gal-(1-&gt;3)-beta-D-Gal-(1-&gt;4)-beta-D-2-O-P-Xyl]-L-seryl-[protein] + H2O = 3-O-(beta-D-GlcA-(1-&gt;3)-beta-D-Gal-(1-&gt;3)-beta-D-Gal-(1-&gt;4)-beta-D-Xyl)-L-seryl-[protein] + phosphate. Its function is as follows. Responsible for the 2-O-dephosphorylation of xylose in the glycosaminoglycan-protein linkage region of proteoglycans thereby regulating the amount of mature glycosaminoglycan (GAG) chains. Sulfated glycosaminoglycans (GAGs), including heparan sulfate and chondroitin sulfate, are synthesized on the so-called common GAG-protein linkage region (GlcUAbeta1-3Galbeta1-3Galbeta1-4Xylbeta1-O-Ser) of core proteins, which is formed by the stepwise addition of monosaccharide residues by the respective specific glycosyltransferases. Xylose 2-O-dephosphorylation during completion of linkage region formation is a prerequisite for the initiation and efficient elongation of the repeating disaccharide region of GAG chains. This chain is 2-phosphoxylose phosphatase 1, found in Xenopus tropicalis (Western clawed frog).